The chain runs to 218 residues: Octanoyltransferase (218 aa).

One can recognise a BPL/LPL catalytic domain in the interval 34–209 (ETSRDELWIV…TFSQELGYQH (176 aa)). Substrate contacts are provided by residues 73–80 (RGGQVTYH), 140–142 (SLG), and 153–155 (GLA). Cys-171 functions as the Acyl-thioester intermediate in the catalytic mechanism.

This sequence belongs to the LipB family.

It localises to the cytoplasm. It catalyses the reaction octanoyl-[ACP] + L-lysyl-[protein] = N(6)-octanoyl-L-lysyl-[protein] + holo-[ACP] + H(+). The protein operates within protein modification; protein lipoylation via endogenous pathway; protein N(6)-(lipoyl)lysine from octanoyl-[acyl-carrier-protein]: step 1/2. Functionally, catalyzes the transfer of endogenously produced octanoic acid from octanoyl-acyl-carrier-protein onto the lipoyl domains of lipoate-dependent enzymes. Lipoyl-ACP can also act as a substrate although octanoyl-ACP is likely to be the physiological substrate. The sequence is that of Octanoyltransferase from Shewanella loihica (strain ATCC BAA-1088 / PV-4).